A 50-amino-acid chain; its full sequence is Sproutin (50 aa).

Ser8 is subject to Phosphoserine; by PKC.

Brain.

Neurite outgrowth factor. The polypeptide is Sproutin (Rattus norvegicus (Rat)).